We begin with the raw amino-acid sequence, 268 residues long: Tryptophan synthase alpha chain (268 aa).

Residues Glu-49 and Asp-60 each act as proton acceptor in the active site.

It belongs to the TrpA family. As to quaternary structure, tetramer of two alpha and two beta chains.

It catalyses the reaction (1S,2R)-1-C-(indol-3-yl)glycerol 3-phosphate + L-serine = D-glyceraldehyde 3-phosphate + L-tryptophan + H2O. The protein operates within amino-acid biosynthesis; L-tryptophan biosynthesis; L-tryptophan from chorismate: step 5/5. Functionally, the alpha subunit is responsible for the aldol cleavage of indoleglycerol phosphate to indole and glyceraldehyde 3-phosphate. The protein is Tryptophan synthase alpha chain of Aliivibrio fischeri (strain ATCC 700601 / ES114) (Vibrio fischeri).